Reading from the N-terminus, the 131-residue chain is D-ribose pyranase (131 aa).

Histidine 20 serves as the catalytic Proton donor. Substrate-binding positions include aspartate 28, histidine 98, and 120 to 122; that span reads YSN.

The protein belongs to the RbsD / FucU family. RbsD subfamily. Homodecamer.

It is found in the cytoplasm. The catalysed reaction is beta-D-ribopyranose = beta-D-ribofuranose. It participates in carbohydrate metabolism; D-ribose degradation; D-ribose 5-phosphate from beta-D-ribopyranose: step 1/2. In terms of biological role, catalyzes the interconversion of beta-pyran and beta-furan forms of D-ribose. The chain is D-ribose pyranase from Lactobacillus johnsonii (strain CNCM I-12250 / La1 / NCC 533).